The chain runs to 252 residues: Geranylgeranylglyceryl phosphate synthase (252 aa).

Mg(2+) contacts are provided by Asp-27 and Thr-57. Residues 175-181 (YLEAGSG), 206-207 (GG), and 228-229 (GN) contribute to the sn-glycerol 1-phosphate site.

The protein belongs to the GGGP/HepGP synthase family. Group II subfamily. Mg(2+) is required as a cofactor.

The protein localises to the cytoplasm. It carries out the reaction sn-glycerol 1-phosphate + (2E,6E,10E)-geranylgeranyl diphosphate = sn-3-O-(geranylgeranyl)glycerol 1-phosphate + diphosphate. Its pathway is membrane lipid metabolism; glycerophospholipid metabolism. In terms of biological role, prenyltransferase that catalyzes the transfer of the geranylgeranyl moiety of geranylgeranyl diphosphate (GGPP) to the C3 hydroxyl of sn-glycerol-1-phosphate (G1P). This reaction is the first ether-bond-formation step in the biosynthesis of archaeal membrane lipids. In Metallosphaera sedula (strain ATCC 51363 / DSM 5348 / JCM 9185 / NBRC 15509 / TH2), this protein is Geranylgeranylglyceryl phosphate synthase.